The primary structure comprises 141 residues: Myosin regulatory light chain cdc4 (141 aa).

Phosphoserine occurs at positions 2 and 6. EF-hand domains lie at 3 to 38 (TDDSPYKQAFSLFDRHGTGRIPKTSIGDLLRACGQN), 74 to 109 (GDPEEFVKGFQVFDKDATGMIGVGELRYVLTSLGEK), and 109 to 141 (KLSNEEMDELLKGVPVKDGMVNYHDFVQMILAN). Ca(2+)-binding residues include Asp87, Asp89, Thr91, Met93, and Glu98.

Binds to myosin II chains myo2 and myo3. Interacts with vps27 and a PI 4-kinase pik1. Post-translationally, phosphorylated on either Ser-2 or Ser-6 but not both. Phosphorylation is not essential for the function of the protein.

Its subcellular location is the cytoplasm. In terms of biological role, involved in cytokinesis. Required for the formation and function of the contractile ring. In Schizosaccharomyces pombe (strain 972 / ATCC 24843) (Fission yeast), this protein is Myosin regulatory light chain cdc4 (cdc4).